The chain runs to 252 residues: Adenosylcobinamide-GDP ribazoletransferase (252 aa).

The next 7 helical transmembrane spans lie at leucine 4 to glutamate 24, proline 38 to leucine 58, isoleucine 60 to leucine 80, phenylalanine 113 to leucine 133, isoleucine 141 to isoleucine 161, leucine 190 to valine 210, and valine 232 to threonine 252.

Belongs to the CobS family. Requires Mg(2+) as cofactor.

It is found in the cell membrane. It carries out the reaction alpha-ribazole + adenosylcob(III)inamide-GDP = adenosylcob(III)alamin + GMP + H(+). The enzyme catalyses alpha-ribazole 5'-phosphate + adenosylcob(III)inamide-GDP = adenosylcob(III)alamin 5'-phosphate + GMP + H(+). It functions in the pathway cofactor biosynthesis; adenosylcobalamin biosynthesis; adenosylcobalamin from cob(II)yrinate a,c-diamide: step 7/7. Functionally, joins adenosylcobinamide-GDP and alpha-ribazole to generate adenosylcobalamin (Ado-cobalamin). Also synthesizes adenosylcobalamin 5'-phosphate from adenosylcobinamide-GDP and alpha-ribazole 5'-phosphate. In Clostridium botulinum (strain Eklund 17B / Type B), this protein is Adenosylcobinamide-GDP ribazoletransferase.